The chain runs to 309 residues: Probable nitrogen assimilation transcriptional activator (309 aa).

The region spanning 1 to 57 is the HTH lysR-type domain; it reads MRLEQLQAFLKVAELGSFQQAALQSEVTQSTISRQIQGLESALKCQLFHRGAQAKLT. The H-T-H motif DNA-binding region spans 18–38; that stretch reads FQQAALQSEVTQSTISRQIQG.

It belongs to the LysR transcriptional regulatory family.

Functionally, seems to regulate utilization of fixed nitrogen by controlling the expression of a certain gene(s) involved in nitrogen metabolism. This is Probable nitrogen assimilation transcriptional activator (ntcB) from Synechocystis sp. (strain ATCC 27184 / PCC 6803 / Kazusa).